The sequence spans 657 residues: PAN2-PAN3 deadenylation complex subunit PAN3 (657 aa).

3 disordered regions span residues 1–29, 52–98, and 115–135; these read MASAGKPNIDDGRRGTSSPKLKGRDHAKD, HDPS…SATI, and SRSNAATPQSQPETSTPEWSI. Residues 27–55 form a C3H1-type zinc finger; that stretch reads AKDTLCRNVTIYGRCRYEDKGCVFNHDPS. Residues 52-67 show a composition bias toward basic and acidic residues; the sequence is HDPSRVNDAQHPERSS. Composition is skewed to polar residues over residues 75 to 98 and 115 to 132; these read DSPSFTPSATPLNGSSGLKKSATI and SRSNAATPQSQPETSTPE. Residues 259-521 form a pseudokinase domain region; it reads QTLPNSQLPT…TIDIFISGIS (263 aa). ATP contacts are provided by residues Arg311, 360–367, and 421–422; these read DYHPLSKT and SK. The stretch at 522 to 560 forms a coiled coil; sequence SQLMSTFDSSLHLDDQLISDLSRELENARLVRLLTKLNF. Residues 561 to 657 form a knob domain region; the sequence is INERPEYEHD…QALLKPARRI (97 aa).

It belongs to the protein kinase superfamily. PAN3 family. In terms of assembly, homodimer. Forms a heterotrimer with a catalytic subunit PAN2 to form the poly(A)-nuclease (PAN) deadenylation complex. Interacts (via PAM-2 motif) with poly(A)-binding protein PAB1 (via PABC domain), conferring substrate specificity of the enzyme complex.

The protein localises to the cytoplasm. In terms of biological role, regulatory subunit of the poly(A)-nuclease (PAN) deadenylation complex, one of two cytoplasmic mRNA deadenylases involved in mRNA turnover. PAN specifically shortens poly(A) tails of RNA and the activity is stimulated by poly(A)-binding protein PAB1. PAN deadenylation is followed by rapid degradation of the shortened mRNA tails by the CCR4-NOT complex. Deadenylated mRNAs are then degraded by two alternative mechanisms, namely exosome-mediated 3'-5' exonucleolytic degradation, or deadenylation-dependent mRNA decaping and subsequent 5'-3' exonucleolytic degradation by XRN1. May also be involved in post-transcriptional maturation of mRNA poly(A) tails. PAN3 acts as a positive regulator for PAN activity, recruiting the catalytic subunit PAN2 to mRNA via its interaction with RNA and with PAB1. This chain is PAN2-PAN3 deadenylation complex subunit PAN3, found in Coccidioides immitis (strain RS) (Valley fever fungus).